The primary structure comprises 216 residues: Glycerol uptake facilitator protein-like 6 (216 aa).

The next 2 helical transmembrane spans lie at 5 to 25 (LAEF…VVIA) and 30 to 50 (LAIG…FGGI). Residues 56–58 (NPA) carry the NPA 1 motif. Transmembrane regions (helical) follow at residues 72–92 (ADAI…SAAV), 114–134 (IGSG…LMVI), and 147–167 (FAGL…LNLT). The NPA 2 signature appears at 172-174 (NPA). The chain crosses the membrane as a helical span at residues 191-213 (LWVYILAPEVGAILAAFCARVMG).

This sequence belongs to the MIP/aquaporin (TC 1.A.8) family.

It localises to the cell membrane. In terms of biological role, probable transporter that facilitates the transmembrane diffusion of an unknown substrate. Is not permeable to water, dihydroxyacetone, glycerol, urea, H(2)O(2) and D/L-lactic acid. In Lactiplantibacillus plantarum (strain ATCC BAA-793 / NCIMB 8826 / WCFS1) (Lactobacillus plantarum), this protein is Glycerol uptake facilitator protein-like 6.